A 140-amino-acid chain; its full sequence is Small ribosomal subunit protein bS16 (140 aa).

The tract at residues 86–140 (TVGKAKQAAKREEEAKQAAKEAAEAKAAAEAEAAAAAEAAKAEDAPDGETESSEG) is disordered. Basic and acidic residues predominate over residues 94–114 (AKREEEAKQAAKEAAEAKAAA). Over residues 115–124 (EAEAAAAAEA) the composition is skewed to low complexity. A compositionally biased stretch (acidic residues) spans 130–140 (APDGETESSEG).

It belongs to the bacterial ribosomal protein bS16 family.

The protein is Small ribosomal subunit protein bS16 of Parasynechococcus marenigrum (strain WH8102).